A 537-amino-acid polypeptide reads, in one-letter code: Biotin carboxylase, chloroplastic (537 aa).

The transit peptide at 1–71 (MDASMITNSK…ATSGGLGVTC (71 aa)) directs the protein to the chloroplast. ATP is bound by residues K188, K230, 236–237 (GG), 272–275 (EKFV), and H280. An ATP-grasp domain is found at 192 to 389 (RETMKNAGVP…LIEEQIRVAM (198 aa)). K309 is a hydrogencarbonate binding site. ATP is bound by residues E347 and E360. Residues E347, E360, and N362 each contribute to the Mg(2+) site. Mn(2+) contacts are provided by E347, E360, and N362. 3 residues coordinate hydrogencarbonate: R364, V367, and R410. R364 is a catalytic residue. A biotin-binding site is contributed by R410.

Acetyl-CoA carboxylase is a heterohexamer composed of biotin carboxyl carrier protein, biotin carboxylase and two subunits each of ACCase subunit alpha and ACCase plastid-coded subunit beta (accD). Mg(2+) serves as cofactor. It depends on Mn(2+) as a cofactor. As to expression, accumulates in fatty acids synthesizing tissues. Mostly expressed in siliques, developing leaves, and flowers, present in roots and embryos (especially at torpedo stage), and, to a lower extent, in mature leaves.

The protein localises to the plastid. It is found in the chloroplast. It catalyses the reaction N(6)-biotinyl-L-lysyl-[protein] + hydrogencarbonate + ATP = N(6)-carboxybiotinyl-L-lysyl-[protein] + ADP + phosphate + H(+). Its pathway is lipid metabolism; malonyl-CoA biosynthesis; malonyl-CoA from acetyl-CoA: step 1/1. Its function is as follows. This protein is a component of the acetyl coenzyme A carboxylase complex; first, biotin carboxylase catalyzes the carboxylation of the carrier protein and then the transcarboxylase transfers the carboxyl group to form malonyl-CoA. The chain is Biotin carboxylase, chloroplastic (CAC2) from Arabidopsis thaliana (Mouse-ear cress).